We begin with the raw amino-acid sequence, 330 residues long: 5'-AMP-activated protein kinase subunit gamma-1 (330 aa).

The segment at 1–24 (MEAVPSSDSYPAVENEHLQETPES) is disordered. CBS domains lie at 43 to 103 (PTSS…KSAL), 125 to 187 (SFKP…PKPE), and 198 to 260 (IGTY…NLDV). Residues arginine 70, 85 to 90 (MLTITD), valine 130, 151 to 152 (HR), and lysine 170 contribute to the ADP site. AMP is bound by residues arginine 70, 85-90 (MLTITD), valine 130, histidine 151, 151-152 (HR), lysine 170, threonine 200, alanine 205, 226-227 (SA), and 242-245 (SKFD). Residues arginine 70, 85-90 (MLTITD), valine 130, 151-152 (HR), arginine 152, and lysine 170 contribute to the ATP site. Residues 138-159 (LFDAVSSLIRNKIHRLPVIDPE) carry the AMPK pseudosubstrate motif. An ADP-binding site is contributed by 242–245 (SKFD). 242–245 (SKFD) contacts ATP. Serine 261 carries the phosphoserine; by ULK1 modification. At threonine 263 the chain carries Phosphothreonine; by ULK1. Arginine 269 provides a ligand contact to ADP. Arginine 269 contributes to the AMP binding site. Arginine 269 contributes to the ATP binding site. At serine 270 the chain carries Phosphoserine; by ULK1. The region spanning 272–329 (YFEGVLKCYLHETLETIINRLVEAEVHRLVVVDENDVVKGIVSLSDILQALVLTGGEK) is the CBS 4 domain. Residues leucine 277 and 298–299 (HR) contribute to the ADP site. AMP contacts are provided by residues leucine 277, histidine 298, 298-299 (HR), and 314-317 (SLSD). Residues leucine 277 and 298-299 (HR) each bind ATP.

This sequence belongs to the 5'-AMP-activated protein kinase gamma subunit family. As to quaternary structure, AMPK is a heterotrimer of an alpha catalytic subunit (PRKAA1 or PRKAA2), a beta (PRKAB1 or PRKAB2) and a gamma non-catalytic subunits (PRKAG1, PRKAG2 or PRKAG3). Interacts with FNIP1 and FNIP2. In terms of processing, phosphorylated by ULK1 and ULK2; leading to negatively regulate AMPK activity and suggesting the existence of a regulatory feedback loop between ULK1, ULK2 and AMPK. Post-translationally, glycosylated; O-GlcNAcylated by OGT, promoting the AMP-activated protein kinase (AMPK) activity.

In terms of biological role, AMP/ATP-binding subunit of AMP-activated protein kinase (AMPK), an energy sensor protein kinase that plays a key role in regulating cellular energy metabolism. In response to reduction of intracellular ATP levels, AMPK activates energy-producing pathways and inhibits energy-consuming processes: inhibits protein, carbohydrate and lipid biosynthesis, as well as cell growth and proliferation. AMPK acts via direct phosphorylation of metabolic enzymes, and by longer-term effects via phosphorylation of transcription regulators. Also acts as a regulator of cellular polarity by remodeling the actin cytoskeleton; probably by indirectly activating myosin. Gamma non-catalytic subunit mediates binding to AMP, ADP and ATP, leading to activate or inhibit AMPK: AMP-binding results in allosteric activation of alpha catalytic subunit (PRKAA1 or PRKAA2) both by inducing phosphorylation and preventing dephosphorylation of catalytic subunits. ADP also stimulates phosphorylation, without stimulating already phosphorylated catalytic subunit. ATP promotes dephosphorylation of catalytic subunit, rendering the AMPK enzyme inactive. This Bos taurus (Bovine) protein is 5'-AMP-activated protein kinase subunit gamma-1 (PRKAG1).